The sequence spans 491 residues: Ran-binding protein 3 (491 aa).

Over residues 1–10 (MADLANEEKP) the composition is skewed to basic and acidic residues. Disordered stretches follow at residues 1-177 (MADL…HCEE) and 255-292 (VLSPPKLNEANSDTSRETTHAQSGSESSSQEAAPKKES). Alanine 2 carries the post-translational modification N-acetylalanine. N6-acetyllysine is present on residues lysine 9 and lysine 21. Residues serine 32, serine 33, and serine 40 each carry the phosphoserine modification. The short motif at 49 to 57 (PPVKRERTS) is the Nuclear localization signal element. A compositionally biased stretch (basic and acidic residues) spans 51-67 (VKRERTSSLTHSEEKSS). The residue at position 56 (threonine 56) is a Phosphothreonine. Serine 58 carries the post-translational modification Phosphoserine. Polar residues-rich tracts occupy residues 111 to 124 (VLSQTVPSSGTNGV) and 133 to 149 (PATSVSPENLTQRSPSE). Position 146 is a phosphoserine (serine 146). The segment covering 152–162 (EETHTLEEKVP) has biased composition (basic and acidic residues). Serine 257, serine 277, serine 279, and serine 296 each carry phosphoserine. Positions 275-286 (AQSGSESSSQEA) are enriched in low complexity. A RanBD1 domain is found at 302-442 (KATAWTCLLE…LALRSRAEQE (141 aa)). The interval 438 to 491 (RAEQEQEAKAPPPEPGATRATEEEDSDEDAVLAPSGVTGAGTGDEGDGQAPGST) is disordered. Phosphoserine is present on serine 463.

As to quaternary structure, interacts with CHC1 in a Ran-stimulated manner. Interacts with XPO1. Interacts (via its C-terminal R domain) with SMAD2 (dephosphorylated form via its MH1 and MH2 domains); the interaction results in the nuclear export of SMAD2 and termination of the TGF-beta signaling. Interacts (via its C-terminal R domain) with SMAD3 (dephosphorylated form via its MH1 domain); the interaction results in the nuclear export of SMAD3 and termination of the TGF-beta signaling. Phosphorylation at Ser-58 promotes its import into the nucleus.

The protein resides in the cytoplasm. The protein localises to the nucleus. Functionally, acts as a cofactor for XPO1/CRM1-mediated nuclear export, perhaps as export complex scaffolding protein. Bound to XPO1/CRM1, stabilizes the XPO1/CRM1-cargo interaction. In the absence of Ran-bound GTP prevents binding of XPO1/CRM1 to the nuclear pore complex. Binds to CHC1/RCC1 and increases the guanine nucleotide exchange activity of CHC1/RCC1. Recruits XPO1/CRM1 to CHC1/RCC1 in a Ran-dependent manner. Negative regulator of TGF-beta signaling through interaction with the R-SMAD proteins, SMAD2 and SMAD3, and mediating their nuclear export. The chain is Ran-binding protein 3 (Ranbp3) from Mus musculus (Mouse).